The primary structure comprises 364 residues: DNA replication and repair protein RecF (364 aa).

30-37 (GNNGMGKT) is a binding site for ATP.

It belongs to the RecF family.

The protein resides in the cytoplasm. In terms of biological role, the RecF protein is involved in DNA metabolism; it is required for DNA replication and normal SOS inducibility. RecF binds preferentially to single-stranded, linear DNA. It also seems to bind ATP. In Porphyromonas gingivalis (strain ATCC 33277 / DSM 20709 / CIP 103683 / JCM 12257 / NCTC 11834 / 2561), this protein is DNA replication and repair protein RecF.